The following is a 298-amino-acid chain: Acetylglutamate kinase (298 aa).

Residues 69–70 (GG), Arg91, and Asn196 contribute to the substrate site.

Belongs to the acetylglutamate kinase family. ArgB subfamily.

Its subcellular location is the cytoplasm. The enzyme catalyses N-acetyl-L-glutamate + ATP = N-acetyl-L-glutamyl 5-phosphate + ADP. It participates in amino-acid biosynthesis; L-arginine biosynthesis; N(2)-acetyl-L-ornithine from L-glutamate: step 2/4. Catalyzes the ATP-dependent phosphorylation of N-acetyl-L-glutamate. The sequence is that of Acetylglutamate kinase from Rhodopseudomonas palustris (strain ATCC BAA-98 / CGA009).